The chain runs to 306 residues: Triplex capsid protein 2 (306 aa).

This sequence belongs to the herpesviridae TRX2 protein family. Interacts with TRX1 and major capisd protein/MCP.

The protein resides in the virion. Its subcellular location is the host nucleus. In terms of biological role, structural component of the T=16 icosahedral capsid. The capsid is composed of pentamers and hexamers of major capsid protein/MCP, which are linked together by heterotrimers called triplexes. These triplexes are formed by a single molecule of triplex protein 1/TRX1 and two copies of triplex protein 2/TRX2. Additionally, TRX1 is required for efficient transport of TRX2 to the nucleus, which is the site of capsid assembly. In Human cytomegalovirus (strain AD169) (HHV-5), this protein is Triplex capsid protein 2.